Here is a 141-residue protein sequence, read N- to C-terminus: Holo-[acyl-carrier-protein] synthase (141 aa).

Mg(2+) is bound by residues Asp8 and Glu63.

This sequence belongs to the P-Pant transferase superfamily. AcpS family. The cofactor is Mg(2+).

The protein localises to the cytoplasm. It catalyses the reaction apo-[ACP] + CoA = holo-[ACP] + adenosine 3',5'-bisphosphate + H(+). In terms of biological role, transfers the 4'-phosphopantetheine moiety from coenzyme A to a Ser of acyl-carrier-protein. This Rhodospirillum centenum (strain ATCC 51521 / SW) protein is Holo-[acyl-carrier-protein] synthase.